Consider the following 332-residue polypeptide: Oligopeptide transport ATP-binding protein OppF (332 aa).

The ABC transporter domain maps to 23–264; it reads KNDKSLFFAK…TKHPYTKALM (242 aa). 56 to 63 contributes to the ATP binding site; that stretch reads GESGCGKS.

It belongs to the ABC transporter superfamily. In terms of assembly, the complex is composed of two ATP-binding proteins (OppD and OppF), two transmembrane proteins (OppB and OppC) and a solute-binding protein (OppA).

The protein localises to the cell inner membrane. The enzyme catalyses a [peptide](out) + ATP + H2O = a [peptide](in) + ADP + phosphate + H(+). In terms of biological role, part of the ABC transporter complex OppABCDF involved in the uptake of oligopeptides. Probably responsible for energy coupling to the transport system. The chain is Oligopeptide transport ATP-binding protein OppF (oppF) from Haemophilus influenzae (strain ATCC 51907 / DSM 11121 / KW20 / Rd).